The primary structure comprises 154 residues: Jupiter microtubule associated homolog 1 (154 aa).

Methionine 1 bears the N-acetylmethionine mark. Positions 1–19 (MTTTTTFKGVDPNSRNSSR) are enriched in polar residues. The tract at residues 1–154 (MTTTTTFKGV…PGGKSSLVLG (154 aa)) is disordered. Residue threonine 2 is modified to N-acetylthreonine; in Hematological and neurological expressed 1 protein, N-terminally processed. Phosphoserine is present on residues serine 28 and serine 31. Residue threonine 54 is modified to Phosphothreonine. Serine 71, serine 80, serine 87, serine 88, and serine 92 each carry phosphoserine. Polar residues predominate over residues 80–91 (SGPQRRNSSEAN). The segment covering 96 to 108 (LDLKGEGDVHENV) has biased composition (basic and acidic residues). Over residues 125-138 (PAAPVPSPVAPAPV) the composition is skewed to pro residues. At serine 131 the chain carries Phosphoserine. The residue at position 148 (lysine 148) is an N6-acetyllysine.

This sequence belongs to the JUPITER family. As to quaternary structure, interacts with the complex composed, at least, of APC, CTNNB1 and GSK3B; the interaction takes place with the inactive form of GSK3B (phosphorylated at 'Ser-9').

The protein resides in the nucleus. The protein localises to the cytoplasm. Modulates negatively AKT-mediated GSK3B signaling. Induces CTNNB1 'Ser-33' phosphorylation and degradation through the suppression of the inhibitory 'Ser-9' phosphorylation of GSK3B, which represses the function of the APC:CTNNB1:GSK3B complex and the interaction with CDH1/E-cadherin in adherent junctions. Plays a role in the regulation of cell cycle and cell adhesion. Has an inhibitory role on AR-signaling pathway through the induction of receptor proteasomal degradation. This is Jupiter microtubule associated homolog 1 from Bos taurus (Bovine).